The primary structure comprises 369 residues: Phosphoribosyl pyrophosphate synthase-associated protein 2 (369 aa).

Methionine 1 bears the N-acetylmethionine mark. Position 5 is a phosphothreonine (threonine 5). Phosphoserine is present on residues serine 219, serine 227, and serine 233.

Belongs to the ribose-phosphate pyrophosphokinase family. Binds to PRPS1 and PRPS2. Ubiquitous.

Its function is as follows. Seems to play a negative regulatory role in 5-phosphoribose 1-diphosphate synthesis. This Homo sapiens (Human) protein is Phosphoribosyl pyrophosphate synthase-associated protein 2 (PRPSAP2).